A 95-amino-acid polypeptide reads, in one-letter code: Large ribosomal subunit protein uL23 (95 aa).

This sequence belongs to the universal ribosomal protein uL23 family. Part of the 50S ribosomal subunit. Contacts protein L29 and trigger factor when it is bound to the ribosome.

One of the early assembly protein it binds 23S rRNA. One of the proteins that surrounds the polypeptide exit tunnel on the outside of the subunit. Forms the main docking site for trigger factor binding to the ribosome. The sequence is that of Large ribosomal subunit protein uL23 from Deinococcus radiodurans (strain ATCC 13939 / DSM 20539 / JCM 16871 / CCUG 27074 / LMG 4051 / NBRC 15346 / NCIMB 9279 / VKM B-1422 / R1).